A 64-amino-acid polypeptide reads, in one-letter code: Large ribosomal subunit protein uL29 (64 aa).

This sequence belongs to the universal ribosomal protein uL29 family.

The chain is Large ribosomal subunit protein uL29 from Verminephrobacter eiseniae (strain EF01-2).